Here is a 414-residue protein sequence, read N- to C-terminus: L-cysteine:1D-myo-inositol 2-amino-2-deoxy-alpha-D-glucopyranoside ligase (414 aa).

The disordered stretch occupies residues 1 to 38 (MRSWPAPEVPNLPEAGLPGPALPLHLHDTATGTVRPTR). Residues 11–38 (NLPEAGLPGPALPLHLHDTATGTVRPTR) are compositionally biased toward low complexity. Residue Cys-48 participates in Zn(2+) binding. Residues 48–51 (CGIT), Thr-63, and 86–88 (NVT) contribute to the L-cysteinyl-5'-AMP site. The 'HIGH' region signature appears at 50-60 (ITPYDATHLGH). The 'ERGGDP' region motif lies at 188-193 (ERGGDP). Trp-228 provides a ligand contact to L-cysteinyl-5'-AMP. A Zn(2+)-binding site is contributed by Cys-232. Position 250–252 (250–252 (GSD)) interacts with L-cysteinyl-5'-AMP. A Zn(2+)-binding site is contributed by His-257. L-cysteinyl-5'-AMP is bound at residue Val-284. The 'KMSKS' region signature appears at 290–294 (KMSKS).

It belongs to the class-I aminoacyl-tRNA synthetase family. MshC subfamily. As to quaternary structure, monomer. Requires Zn(2+) as cofactor.

It carries out the reaction 1D-myo-inositol 2-amino-2-deoxy-alpha-D-glucopyranoside + L-cysteine + ATP = 1D-myo-inositol 2-(L-cysteinylamino)-2-deoxy-alpha-D-glucopyranoside + AMP + diphosphate + H(+). Functionally, catalyzes the ATP-dependent condensation of GlcN-Ins and L-cysteine to form L-Cys-GlcN-Ins. This chain is L-cysteine:1D-myo-inositol 2-amino-2-deoxy-alpha-D-glucopyranoside ligase, found in Thermomonospora curvata (strain ATCC 19995 / DSM 43183 / JCM 3096 / KCTC 9072 / NBRC 15933 / NCIMB 10081 / Henssen B9).